A 254-amino-acid chain; its full sequence is NH(3)-dependent NAD(+) synthetase (254 aa).

32–39 lines the ATP pocket; sequence GISGGIDS. Aspartate 38 is a Mg(2+) binding site. Position 113 (arginine 113) interacts with deamido-NAD(+). Threonine 133 contacts ATP. Glutamate 138 is a Mg(2+) binding site. Deamido-NAD(+) is bound by residues lysine 146 and aspartate 153. Positions 162 and 184 each coordinate ATP. 244 to 245 lines the deamido-NAD(+) pocket; it reads HK.

This sequence belongs to the NAD synthetase family. Homodimer.

It catalyses the reaction deamido-NAD(+) + NH4(+) + ATP = AMP + diphosphate + NAD(+) + H(+). The protein operates within cofactor biosynthesis; NAD(+) biosynthesis; NAD(+) from deamido-NAD(+) (ammonia route): step 1/1. Its function is as follows. Catalyzes the ATP-dependent amidation of deamido-NAD to form NAD. Uses ammonia as a nitrogen source. The polypeptide is NH(3)-dependent NAD(+) synthetase (Thermococcus kodakarensis (strain ATCC BAA-918 / JCM 12380 / KOD1) (Pyrococcus kodakaraensis (strain KOD1))).